The chain runs to 346 residues: Sulfate/thiosulfate import ATP-binding protein CysA 1 (346 aa).

The ABC transporter domain occupies 3–237 (VKVSGITKQF…PNSPFVFSFI (235 aa)). 35–42 (GPSGSGKT) provides a ligand contact to ATP.

It belongs to the ABC transporter superfamily. Sulfate/tungstate importer (TC 3.A.1.6) family. As to quaternary structure, the complex is composed of two ATP-binding proteins (CysA), two transmembrane proteins (CysT and CysW) and a solute-binding protein (CysP).

The protein resides in the cell inner membrane. The enzyme catalyses sulfate(out) + ATP + H2O = sulfate(in) + ADP + phosphate + H(+). It catalyses the reaction thiosulfate(out) + ATP + H2O = thiosulfate(in) + ADP + phosphate + H(+). In terms of biological role, part of the ABC transporter complex CysAWTP involved in sulfate/thiosulfate import. Responsible for energy coupling to the transport system. This is Sulfate/thiosulfate import ATP-binding protein CysA 1 from Agrobacterium fabrum (strain C58 / ATCC 33970) (Agrobacterium tumefaciens (strain C58)).